A 323-amino-acid polypeptide reads, in one-letter code: MPSTFESQLFFSRPFLSKRQIQRAQKNTISDYRNYNQKKLAVFKFLSDLCVQLKFPRKTLETAVYFYQRYHLFNRFETEVCYTVATSCLTLGCKEVETIKKTNDICTLSLRLRNVVKINTDILENFKKRVFQIELRILESCSFDYRVNNYVHIDEYVIKIGRELSFDYKLCNLAWVIAYDALKLETILVIPQHSIALAILKIAYELLDNKNWSSKRYSLFETDEKSVNEAYFDIVNFYINSFDMCDLQRHLPADLLPIGVERFMELKKNAGPESGLPQIPDHLLNADPYITITRDNNVQERRYVLSLELINGESSINSSTRHA.

The protein belongs to the cyclin family. In terms of assembly, CTDK-I consists of three subunits, CTK1, CTK2 and CTK3 (also called alpha, beta and gamma). Interacts with CTK1. Heterodimerization with CTK3 is required to protect this subunit from degradation. Phosphorylated. Ubiquitinated. Phosphorylation and ubiquitination lead to degradation in growth-related way by the ubiquitin-proteasome pathway. Neither phosphorylation nor degradation requires association with CTK1.

It localises to the nucleus. The protein resides in the nucleolus. In terms of biological role, cyclin subunit of the CTDK-I complex, which hyperphosphorylates the C-terminal heptapeptide repeat domain (CTD) of the largest RNA polymerase II subunit. CTDK-I phosphorylates 'Ser-5' if the CTD substrate is not phosphorylated at 'Ser-5', but will phosphorylate 'Ser-2' of a CTD substrate if 'Ser-5' is already phosphorylated. CTDK-I is also more reactive toward substrates that are prephosphorylated at 'Ser-2' or 'Ser-5' compared with an unphosphorylated CTD substrate, therefore efficiently creating doubly phosphorylated CTD repeats. Involved in RNA polymerase II transcriptional elongation, and as part of the CTDK-I complex, pre-mRNA 3'-end processing and SET2 mediated H3K36 methylation. Together with CTK3, required for CTK1 CTD kinase activation. Required for DNA damage induced transcription. Involved in the adaptation to alternative carbon sources, including galactose, glycerol and ethanol, but not raffinose. Required for the integrity of the rDNA locus. The polypeptide is CTD kinase subunit beta (CTK2) (Saccharomyces cerevisiae (strain ATCC 204508 / S288c) (Baker's yeast)).